The sequence spans 448 residues: Thymidine phosphorylase (448 aa).

It belongs to the thymidine/pyrimidine-nucleoside phosphorylase family. In terms of assembly, homodimer.

It catalyses the reaction thymidine + phosphate = 2-deoxy-alpha-D-ribose 1-phosphate + thymine. It functions in the pathway pyrimidine metabolism; dTMP biosynthesis via salvage pathway; dTMP from thymine: step 1/2. The enzymes which catalyze the reversible phosphorolysis of pyrimidine nucleosides are involved in the degradation of these compounds and in their utilization as carbon and energy sources, or in the rescue of pyrimidine bases for nucleotide synthesis. The protein is Thymidine phosphorylase of Vibrio cholerae serotype O1 (strain ATCC 39315 / El Tor Inaba N16961).